Here is a 318-residue protein sequence, read N- to C-terminus: MLNPLNIEYLYLSKLFDNSLIVFNKRQLFRFFVRFFFMTAALPNDSKPKLTPAWTVIFFFTSIHLVALLAFLPQFFSWKAVGMAFLLYVITGGIGITLGFHRCISHRSFNVPKWLEYIFVICGTLACQGGVFEWVGLHRMHHKFSDTTPDPHDSNKGFWWSHIGWMMFEIPAKADIPRYTKDIQDDKFYQFCQNNLILIQVALGLILFALGGWPFVIWGIFVRLVFVFHFTWFVNSATHKFGYVSHESNDYSRNCWWVALLTFGEGWHNNHHAYQYSARHGLQWWEVDLTWMTIKFLSLLGLAKDIKLPPETAMANKA.

The next 2 helical transmembrane spans lie at 56-76 and 80-100; these read VIFF…PQFF and AVGM…TLGF. Residues 101–106 carry the Histidine box-1 motif; sequence HRCISH. A helical transmembrane segment spans residues 117 to 137; that stretch reads YIFVICGTLACQGGVFEWVGL. The Histidine box-2 motif lies at 138–142; it reads HRMHH. The chain crosses the membrane as a helical span at residues 201–221; it reads VALGLILFALGGWPFVIWGIF. Residues 271–275 carry the Histidine box-3 motif; sequence HHAYQ.

It belongs to the fatty acid desaturase type 2 family. Fe(2+) serves as cofactor.

The protein localises to the cellular thylakoid membrane. The catalysed reaction is a 1-octadecanoyl 2-acyl-glycerolipid + 2 reduced [2Fe-2S]-[ferredoxin] + O2 + 2 H(+) = a 1-[(9Z)-octadecenoyl]-2-acyl-glycerolipid + 2 oxidized [2Fe-2S]-[ferredoxin] + 2 H2O. It functions in the pathway lipid metabolism; polyunsaturated fatty acid biosynthesis. Functionally, desaturase involved in fatty acid biosynthesis. Introduces a double bond at carbon 9 of stearoyl groups (18:0) attached to the sn-1 position of the glycerol moiety of membrane glycerolipids. Does not desaturate palmitic acid (16:0), palmitoleic acid (16:1) and cis-vaccenic acid (18:1). This chain is sn-1 stearoyl-lipid 9-desaturase, found in Synechocystis sp. (strain ATCC 27184 / PCC 6803 / Kazusa).